The sequence spans 320 residues: Cytochrome c biogenesis protein CcsA (320 aa).

7 helical membrane passes run 14–34 (VLLL…WCFW), 68–88 (GHFP…ACTL), 101–121 (LVAA…SFAL), 146–166 (VIMV…AVLM), 226–246 (TITV…VWAN), 260–277 (TWAL…HTRL), and 289–309 (VASL…LLGI).

It belongs to the CcmF/CycK/Ccl1/NrfE/CcsA family. In terms of assembly, may interact with ccs1.

It localises to the cellular thylakoid membrane. In terms of biological role, required during biogenesis of c-type cytochromes (cytochrome c6 and cytochrome f) at the step of heme attachment. This Synechococcus sp. (strain WH7803) protein is Cytochrome c biogenesis protein CcsA.